The following is a 196-amino-acid chain: Holliday junction branch migration complex subunit RuvA (196 aa).

Positions 1 to 63 (MINKIYGKII…EDEIKLFGFL (63 aa)) are domain I. The interval 64 to 138 (NVSEREVFEE…GKLVKADELT (75 aa)) is domain II. A region of interest (flexible linker) is located at residue Thr138. The domain III stretch occupies residues 139–196 (SSVFKFKDLEQSIVNMGFDRKLVVAAIKEIMLIDEFLMLREVEQEQFLFRETLKRLSG).

It belongs to the RuvA family. Homotetramer. Forms an RuvA(8)-RuvB(12)-Holliday junction (HJ) complex. HJ DNA is sandwiched between 2 RuvA tetramers; dsDNA enters through RuvA and exits via RuvB. An RuvB hexamer assembles on each DNA strand where it exits the tetramer. Each RuvB hexamer is contacted by two RuvA subunits (via domain III) on 2 adjacent RuvB subunits; this complex drives branch migration. In the full resolvosome a probable DNA-RuvA(4)-RuvB(12)-RuvC(2) complex forms which resolves the HJ.

The protein resides in the cytoplasm. Functionally, the RuvA-RuvB-RuvC complex processes Holliday junction (HJ) DNA during genetic recombination and DNA repair, while the RuvA-RuvB complex plays an important role in the rescue of blocked DNA replication forks via replication fork reversal (RFR). RuvA specifically binds to HJ cruciform DNA, conferring on it an open structure. The RuvB hexamer acts as an ATP-dependent pump, pulling dsDNA into and through the RuvAB complex. HJ branch migration allows RuvC to scan DNA until it finds its consensus sequence, where it cleaves and resolves the cruciform DNA. This is Holliday junction branch migration complex subunit RuvA from Borrelia hermsii (strain HS1 / DAH).